The sequence spans 37 residues: Photosystem II reaction center protein Y (37 aa).

A helical transmembrane segment spans residues 4–22 (AIVVFAPIIAAVAWVVFNI).

The protein belongs to the PsbY family. PSII is composed of 1 copy each of membrane proteins PsbA, PsbB, PsbC, PsbD, PsbE, PsbF, PsbH, PsbI, PsbJ, PsbK, PsbL, PsbM, PsbT, PsbX, PsbY, Psb30/Ycf12, peripheral proteins PsbO, CyanoQ (PsbQ), PsbU, PsbV and a large number of cofactors. It forms dimeric complexes.

The protein localises to the cellular thylakoid membrane. Its function is as follows. Loosely associated component of the core of photosystem II (PSII), it is not always seen in crystals. PSII is a light-driven water plastoquinone oxidoreductase, using light energy to abstract electrons from H(2)O, generating a proton gradient subsequently used for ATP formation. This chain is Photosystem II reaction center protein Y, found in Prochlorococcus marinus (strain MIT 9312).